The following is a 142-amino-acid chain: Transcriptional regulator MraZ (142 aa).

2 consecutive SpoVT-AbrB domains span residues 5-51 and 77-120; these read ASAL…PRPE and AADV…DAAT.

The protein belongs to the MraZ family. As to quaternary structure, forms oligomers.

Its subcellular location is the cytoplasm. The protein localises to the nucleoid. This chain is Transcriptional regulator MraZ, found in Ralstonia pickettii (strain 12J).